Reading from the N-terminus, the 720-residue chain is Collectin-12 (720 aa).

Residues 1–37 (MKDDFNDEEEVQSFGYKRFGIQEGNECTKCKNDWALR) are Cytoplasmic-facing. A helical; Signal-anchor for type II membrane protein membrane pass occupies residues 38–58 (VAIALLYVLCALLTIAVAVLG). Topologically, residues 59–720 (YKVVQRMDNV…RTNESKVPVL (662 aa)) are extracellular. Coiled-coil stretches lie at residues 95–120 (EKSE…QLSD), 216–267 (ISSL…LAAN), and 377–408 (LHGL…LDKE). The tract at residues 433–576 (FTILQGPPGP…GPPGLPGLPA (144 aa)) is disordered. Collagen-like domains lie at 444–503 (GPRG…PGPK) and 510–569 (GRQG…PGPP). Basic and acidic residues predominate over residues 460–479 (PKGEKGEKGAPGDAGPKGEK). Residues 488 to 503 (PGLKGPPGSRGSPGPK) show a composition bias toward low complexity. A compositionally biased stretch (gly residues) spans 504–513 (GSRGSGGRQG). Residues 527–560 (PGRDGQPGPTGPQGPQGLRGPAGPAGLEGARGPV) are compositionally biased toward low complexity. Residues 562–576 (PIGPPGPPGLPGLPA) show a composition bias toward pro residues. 3 cysteine pairs are disulfide-bonded: Cys604–Cys615, Cys634–Cys709, and Cys687–Cys701. In terms of domain architecture, C-type lectin spans 611-710 (FREQCYHFSA…CTERIGFICE (100 aa)). Positions 643, 645, and 649 each coordinate Ca(2+). Lys670, Gln673, and Asp675 together coordinate a carbohydrate. The Ca(2+) site is built by Gln673, Asp675, Asn676, Glu685, Asp686, Asn697, Asp698, and Glu710. Residue Glu685 participates in a carbohydrate binding. Asn697 and Asp698 together coordinate a carbohydrate.

It is found in the membrane. Scavenger receptor that displays several functions associated with host defense. Binds to carbohydrates. This chain is Collectin-12 (colec12), found in Danio rerio (Zebrafish).